The sequence spans 96 residues: MKCFAQIVVLLLVIAFSHGAVITGACDRDVQCGSGTCCAASAWSRNIRFCVPLGNSGEECHPASHKVPYDGKRLSSLCPCKSGLTCSKSGAKFQCS.

An N-terminal signal peptide occupies residues methionine 1–glycine 19. 5 disulfides stabilise this stretch: cysteine 26/cysteine 38, cysteine 32/cysteine 50, cysteine 37/cysteine 78, cysteine 60/cysteine 86, and cysteine 80/cysteine 95.

Expressed by the skin glands.

The protein localises to the secreted. Potent agonist for both PKR1/PROKR1 and PKR2/PROKR2, and inducer of a potent and long-lasting hyperalgesia. Also potentiates capsaicin-induced TRPV1 current, when tested on DRG neurons. At subnanomolar concentrations, this protein both induces potent chemotaxis of macrophages and stimulates LPS-induced production of the pro-inflammatory cytokines IL-1 and IL-12. In vivo, potently stimulates the contraction of the guinea-pig gastrointestinal (GI) smooth muscle (nanomolar concentration). The polypeptide is Prokineticin Bo8 (Bombina orientalis (Oriental fire-bellied toad)).